Reading from the N-terminus, the 126-residue chain is Histone H2B type 2-E (126 aa).

Low complexity predominate over residues 1–12 (MPEPAKSAPAPK). The segment at 1-32 (MPEPAKSAPAPKKGSKKAVTKAQKKDGKKRKR) is disordered. Proline 2 carries the post-translational modification N-acetylproline. Glutamate 3 is modified (ADP-ribosyl glutamic acid). The residue at position 6 (lysine 6) is an N6-(2-hydroxyisobutyryl)lysine; alternate. N6-(beta-hydroxybutyryl)lysine; alternate is present on lysine 6. At lysine 6 the chain carries N6-acetyllysine; alternate. Lysine 6 is modified (N6-butyryllysine; alternate). Position 6 is an N6-crotonyllysine; alternate (lysine 6). An N6-lactoyllysine; alternate modification is found at lysine 6. Lysine 6 is covalently cross-linked (Glycyl lysine isopeptide (Lys-Gly) (interchain with G-Cter in SUMO2); alternate). Serine 7 carries the post-translational modification ADP-ribosylserine. Residue lysine 12 is modified to N6-(beta-hydroxybutyryl)lysine; alternate. Residues lysine 12 and lysine 13 each carry the N6-acetyllysine; alternate modification. 2 positions are modified to N6-crotonyllysine; alternate: lysine 12 and lysine 13. Residue lysine 12 is modified to N6-lactoyllysine; alternate. Lysine 13 is modified (N6-(2-hydroxyisobutyryl)lysine; alternate). Residue serine 15 is modified to Phosphoserine; by STK4/MST1. An N6-acetyllysine; alternate mark is found at lysine 16, lysine 17, lysine 21, and lysine 24. N6-crotonyllysine; alternate occurs at positions 16, 17, 21, and 24. An N6-lactoyllysine; alternate mark is found at lysine 16, lysine 17, lysine 21, and lysine 24. Lysine 17 carries the post-translational modification N6-glutaryllysine; alternate. Lysine 21 and lysine 24 each carry N6-(2-hydroxyisobutyryl)lysine; alternate. At lysine 21 the chain carries N6-(beta-hydroxybutyryl)lysine; alternate. Lysine 21 is subject to N6-butyryllysine; alternate. Lysine 21 participates in a covalent cross-link: Glycyl lysine isopeptide (Lys-Gly) (interchain with G-Cter in SUMO2); alternate. Lysine 25 is subject to N6-(2-hydroxyisobutyryl)lysine. Lysine 35 is modified (N6-(2-hydroxyisobutyryl)lysine; alternate). Lysine 35 carries the post-translational modification N6-(beta-hydroxybutyryl)lysine; alternate. Lysine 35 is modified (N6-crotonyllysine; alternate). Lysine 35 is modified (N6-glutaryllysine; alternate). Residue lysine 35 is modified to N6-succinyllysine; alternate. Lysine 35 is covalently cross-linked (Glycyl lysine isopeptide (Lys-Gly) (interchain with G-Cter in ubiquitin); alternate). Glutamate 36 carries the post-translational modification PolyADP-ribosyl glutamic acid. Residue serine 37 is modified to Phosphoserine; by AMPK. N6-(2-hydroxyisobutyryl)lysine; alternate occurs at positions 44, 47, and 58. Position 44 is an N6-lactoyllysine; alternate (lysine 44). An N6-glutaryllysine; alternate mark is found at lysine 44 and lysine 47. Residue lysine 47 is modified to N6-methyllysine; alternate. Lysine 58 carries the post-translational modification N6,N6-dimethyllysine; alternate. Arginine 80 is modified (dimethylated arginine). Lysine 86 is subject to N6-(2-hydroxyisobutyryl)lysine; alternate. N6-acetyllysine; alternate is present on lysine 86. An N6-lactoyllysine; alternate modification is found at lysine 86. Lysine 86 is modified (N6,N6,N6-trimethyllysine; alternate). An omega-N-methylarginine mark is found at arginine 87 and arginine 93. At lysine 109 the chain carries N6-(2-hydroxyisobutyryl)lysine; alternate. At lysine 109 the chain carries N6-lactoyllysine; alternate. Residue lysine 109 is modified to N6-glutaryllysine; alternate. Lysine 109 carries the N6-methyllysine; alternate modification. An O-linked (GlcNAc) serine glycan is attached at serine 113. At threonine 116 the chain carries Phosphothreonine. An N6-(2-hydroxyisobutyryl)lysine; alternate mark is found at lysine 117 and lysine 121. An N6-(beta-hydroxybutyryl)lysine; alternate modification is found at lysine 117. N6-lactoyllysine; alternate occurs at positions 117 and 121. 2 positions are modified to N6-glutaryllysine; alternate: lysine 117 and lysine 121. N6-succinyllysine; alternate occurs at positions 117 and 121. Residue lysine 117 is modified to N6-methylated lysine; alternate. Residue lysine 121 forms a Glycyl lysine isopeptide (Lys-Gly) (interchain with G-Cter in ubiquitin); alternate linkage.

The protein belongs to the histone H2B family. In terms of assembly, the nucleosome is a histone octamer containing two molecules each of H2A, H2B, H3 and H4 assembled in one H3-H4 heterotetramer and two H2A-H2B heterodimers. The octamer wraps approximately 147 bp of DNA. In terms of processing, monoubiquitination at Lys-35 (H2BK34Ub) by the MSL1/MSL2 dimer is required for histone H3 'Lys-4' (H3K4me) and 'Lys-79' (H3K79me) methylation and transcription activation at specific gene loci, such as HOXA9 and MEIS1 loci. Similarly, monoubiquitination at Lys-121 (H2BK120Ub) by the RNF20/40 complex gives a specific tag for epigenetic transcriptional activation and is also prerequisite for histone H3 'Lys-4' and 'Lys-79' methylation. It also functions cooperatively with the FACT dimer to stimulate elongation by RNA polymerase II. H2BK120Ub also acts as a regulator of mRNA splicing: deubiquitination by USP49 is required for efficient cotranscriptional splicing of a large set of exons. Phosphorylated on Ser-15 (H2BS14ph) by STK4/MST1 during apoptosis; which facilitates apoptotic chromatin condensation. Also phosphorylated on Ser-15 in response to DNA double strand breaks (DSBs), and in correlation with somatic hypermutation and immunoglobulin class-switch recombination. Phosphorylation at Ser-37 (H2BS36ph) by AMPK in response to stress promotes transcription. Post-translationally, ADP-ribosylated by PARP1 or PARP2 on Ser-7 (H2BS6ADPr) in response to DNA damage. H2BS6ADPr promotes recruitment of CHD1L. Mono-ADP-ribosylated on Glu-3 (H2BE2ADPr) by PARP3 in response to single-strand breaks. Poly ADP-ribosylation on Glu-36 (H2BE35ADPr) by PARP1 regulates adipogenesis: it inhibits phosphorylation at Ser-37 (H2BS36ph), thereby blocking expression of pro-adipogenetic genes. In terms of processing, crotonylation (Kcr) is specifically present in male germ cells and marks testis-specific genes in post-meiotic cells, including X-linked genes that escape sex chromosome inactivation in haploid cells. Crotonylation marks active promoters and enhancers and confers resistance to transcriptional repressors. It is also associated with post-meiotically activated genes on autosomes. GlcNAcylation at Ser-113 promotes monoubiquitination of Lys-121. It fluctuates in response to extracellular glucose, and associates with transcribed genes. Post-translationally, lactylated in macrophages by EP300/P300 by using lactoyl-CoA directly derived from endogenous or exogenous lactate, leading to stimulates gene transcription.

Its subcellular location is the nucleus. The protein resides in the chromosome. Core component of nucleosome. Nucleosomes wrap and compact DNA into chromatin, limiting DNA accessibility to the cellular machineries which require DNA as a template. Histones thereby play a central role in transcription regulation, DNA repair, DNA replication and chromosomal stability. DNA accessibility is regulated via a complex set of post-translational modifications of histones, also called histone code, and nucleosome remodeling. In terms of biological role, has broad antibacterial activity. May contribute to the formation of the functional antimicrobial barrier of the colonic epithelium, and to the bactericidal activity of amniotic fluid. The polypeptide is Histone H2B type 2-E (Pongo abelii (Sumatran orangutan)).